Reading from the N-terminus, the 503-residue chain is Putative aldehyde dehydrogenase-like protein C9E9.09c (503 aa).

247 to 252 contacts NAD(+); sequence GSTGVG. S248 is modified (phosphoserine). Catalysis depends on E270, which acts as the Proton acceptor. C304 acts as the Nucleophile in catalysis. S501 carries the post-translational modification Phosphoserine.

Belongs to the aldehyde dehydrogenase family.

This is Putative aldehyde dehydrogenase-like protein C9E9.09c from Schizosaccharomyces pombe (strain 972 / ATCC 24843) (Fission yeast).